We begin with the raw amino-acid sequence, 1877 residues long: Transmembrane protein 131 (1877 aa).

The signal sequence occupies residues 1-20 (MGKRAGGAAAAAAAASTSSA). The Lumenal portion of the chain corresponds to 21 to 1115 (AGLEPAAGRG…AEALPRPNWE (1095 aa)). Residues 107 to 281 (RFEPPMLDFH…ETKGVMRASF (175 aa)) form a papD-L domain region. The chain crosses the membrane as a helical span at residues 1116–1136 (LALYIIISGVMSALFLLVIGT). Residues 1137-1877 (AYLEAQGIWE…WSNSHFPHEN (741 aa)) lie on the Cytoplasmic side of the membrane. Residues 1197–1227 (NASSRPGTGSHRQCGTSVHPHSSHGSKNSAD) are compositionally biased toward polar residues. Disordered stretches follow at residues 1197–1573 (NASS…SSST), 1590–1655 (LKQR…NPTF), 1679–1707 (SDFSSSLGISHIPVDSDGSDSSGLWSPVS), and 1830–1852 (NSAAAHTPSASGPADDLGQTYNP). Over residues 1233-1258 (TRNSSSMSSRTSPQAAASQSTSKTSP) the composition is skewed to low complexity. Positions 1301-1311 (QPPPPVPQHQE) are enriched in pro residues. A phosphoserine mark is found at S1318 and S1338. Composition is skewed to basic and acidic residues over residues 1326–1339 (SHPERASTTRHSSE) and 1349–1360 (AMDKDFDHHDSS). A Phosphoserine modification is found at S1371. The segment covering 1376–1391 (SKGKGKSLQQRKAKPP) has biased composition (basic residues). The span at 1392–1414 (KKQEEKEKRGKGKPQEDELKDAL) shows a compositional bias: basic and acidic residues. The segment covering 1420–1432 (SSTTTETSNPDTE) has biased composition (low complexity). 2 stretches are compositionally biased toward polar residues: residues 1507–1523 (TLASGSKSRNPPKTKGT) and 1538–1550 (LPSSQELGNTSSS). Over residues 1599 to 1608 (PASPSLPTAP) the composition is skewed to pro residues. A compositionally biased stretch (low complexity) spans 1609-1646 (CPFTSRGSYSSVVNSSGSDTKAKQTSSSKSKLTKAASL). Positions 1830 to 1839 (NSAAAHTPSA) are enriched in polar residues. A phosphoserine mark is found at S1857 and S1865.

This sequence belongs to the TMEM131 family. Interacts (via PapD-L domain) with COL1A2 (via C-terminus); the interaction is direct, may occur with other collagen proteins, and is involved in assembly and TRAPPIII ER-to-Golgi transport complex-dependent secretion of collagen. Interacts (via C-terminus) with TRAPPC8 (via C-terminus); the interaction is direct.

Its subcellular location is the membrane. Collagen binding transmembrane protein involved in collagen secretion by recruiting the ER-to-Golgi transport complex TRAPPIII. May play a role in the immune response to viral infection. In Mus musculus (Mouse), this protein is Transmembrane protein 131.